Reading from the N-terminus, the 420-residue chain is Probable pectate lyase C (420 aa).

Residues 1–20 (MKLSEPLLVSLAAFSQAVTA) form the signal peptide. N49, N165, and N202 each carry an N-linked (GlcNAc...) asparagine glycan. R205 is a catalytic residue. The region spanning 262-297 (NANFHGYVQNNYYDPDKDGQLDGFELGVSSSNYGGM) is the EF-hand domain. The Ca(2+) site is built by D275, D277, D279, Q281, and E286. Residues 358–396 (TMGGPGTLNGGTPAKDTDGDGIPDEAEKQLGTDPNTNDS) form a disordered region. An N-linked (GlcNAc...) asparagine glycan is attached at N394.

This sequence belongs to the polysaccharide lyase 1 family. Requires Ca(2+) as cofactor.

It localises to the secreted. It catalyses the reaction Eliminative cleavage of (1-&gt;4)-alpha-D-galacturonan to give oligosaccharides with 4-deoxy-alpha-D-galact-4-enuronosyl groups at their non-reducing ends.. Pectinolytic enzyme consist of four classes of enzymes: pectin lyase, polygalacturonase, pectin methylesterase and rhamnogalacturonase. Among pectinolytic enzymes, pectin lyase is the most important in depolymerization of pectin, since it cleaves internal glycosidic bonds of highly methylated pectins. Favors pectate, the anion, over pectin, the methyl ester. The protein is Probable pectate lyase C (plyC) of Aspergillus fumigatus (strain ATCC MYA-4609 / CBS 101355 / FGSC A1100 / Af293) (Neosartorya fumigata).